Here is a 63-residue protein sequence, read N- to C-terminus: Large ribosomal subunit protein bL28 (63 aa).

This sequence belongs to the bacterial ribosomal protein bL28 family.

This Clostridium kluyveri (strain NBRC 12016) protein is Large ribosomal subunit protein bL28.